Here is a 358-residue protein sequence, read N- to C-terminus: Methionine import ATP-binding protein MetN (358 aa).

One can recognise an ABC transporter domain in the interval 14 to 255; sequence VVFDAVSKRF…SRHETTRALL (242 aa). 52–59 is an ATP binding site; sequence GRSGAGKS.

It belongs to the ABC transporter superfamily. Methionine importer (TC 3.A.1.24) family. The complex is composed of two ATP-binding proteins (MetN), two transmembrane proteins (MetI) and a solute-binding protein (MetQ).

The protein resides in the cell inner membrane. It carries out the reaction L-methionine(out) + ATP + H2O = L-methionine(in) + ADP + phosphate + H(+). The enzyme catalyses D-methionine(out) + ATP + H2O = D-methionine(in) + ADP + phosphate + H(+). Functionally, part of the ABC transporter complex MetNIQ involved in methionine import. Responsible for energy coupling to the transport system. This chain is Methionine import ATP-binding protein MetN, found in Rhizobium meliloti (strain 1021) (Ensifer meliloti).